The sequence spans 219 residues: Probable glucosamine 6-phosphate N-acetyltransferase (219 aa).

The 157-residue stretch at 42–198 folds into the N-acetyltransferase domain; that stretch reads MKVRPLKDTD…EGPTLKRNAT (157 aa). Residues Thr-64, 111–114, and 123–125 each bind substrate; these read KFIH and EDV. 133 to 138 provides a ligand contact to acetyl-CoA; it reads GKQLGK. Substrate is bound by residues 154–155 and Arg-186; that span reads YK.

This sequence belongs to the acetyltransferase family. GNA1 subfamily.

The catalysed reaction is D-glucosamine 6-phosphate + acetyl-CoA = N-acetyl-D-glucosamine 6-phosphate + CoA + H(+). Its pathway is nucleotide-sugar biosynthesis; UDP-N-acetyl-alpha-D-glucosamine biosynthesis; N-acetyl-alpha-D-glucosamine 1-phosphate from alpha-D-glucosamine 6-phosphate (route I): step 1/2. The sequence is that of Probable glucosamine 6-phosphate N-acetyltransferase from Drosophila melanogaster (Fruit fly).